Consider the following 161-residue polypeptide: UPF0178 protein BR1979/BS1330_I1973 (161 aa).

The protein belongs to the UPF0178 family.

The polypeptide is UPF0178 protein BR1979/BS1330_I1973 (Brucella suis biovar 1 (strain 1330)).